A 78-amino-acid chain; its full sequence is ATP synthase subunit c (78 aa).

Helical transmembrane passes span 16–36 and 57–77; these read LATL…ASFL and MALA…ILFV.

It belongs to the ATPase C chain family. As to quaternary structure, F-type ATPases have 2 components, F(1) - the catalytic core - and F(0) - the membrane proton channel. F(1) has five subunits: alpha(3), beta(3), gamma(1), delta(1), epsilon(1). F(0) has three main subunits: a(1), b(2) and c(10-14). The alpha and beta chains form an alternating ring which encloses part of the gamma chain. F(1) is attached to F(0) by a central stalk formed by the gamma and epsilon chains, while a peripheral stalk is formed by the delta and b chains.

The protein resides in the cell inner membrane. In terms of biological role, f(1)F(0) ATP synthase produces ATP from ADP in the presence of a proton or sodium gradient. F-type ATPases consist of two structural domains, F(1) containing the extramembraneous catalytic core and F(0) containing the membrane proton channel, linked together by a central stalk and a peripheral stalk. During catalysis, ATP synthesis in the catalytic domain of F(1) is coupled via a rotary mechanism of the central stalk subunits to proton translocation. Key component of the F(0) channel; it plays a direct role in translocation across the membrane. A homomeric c-ring of between 10-14 subunits forms the central stalk rotor element with the F(1) delta and epsilon subunits. This Hyphomonas neptunium (strain ATCC 15444) protein is ATP synthase subunit c.